The sequence spans 331 residues: Coiled-coil domain-containing protein 92 (331 aa).

Coiled coils occupy residues Met18–Thr44 and Asp76–Ala152. A compositionally biased stretch (low complexity) spans Ser171 to Pro184. Residues Ser171–Ala212 are disordered. Residues Pro193–Arg203 show a composition bias toward basic and acidic residues. Ser209 carries the phosphoserine modification.

As to quaternary structure, interacts with CEP164. In terms of assembly, (Microbial infection) Interacts with ebolavirus protein NP; this interaction sequesters NP in the cytoplasm. In terms of processing, phosphorylated at Ser-209 by TTBK2.

It localises to the cytoplasm. The protein localises to the cytoskeleton. It is found in the microtubule organizing center. Its subcellular location is the centrosome. The protein resides in the centriole. Its function is as follows. Interferon-stimulated protein that plays a role in innate immunity. Strongly inhibits ebolavirus transcription and replication. Forms a complex with viral RNA-bound nucleocapsid NP and thereby prevents the transport of NP to the cell surface. The polypeptide is Coiled-coil domain-containing protein 92 (CCDC92) (Homo sapiens (Human)).